We begin with the raw amino-acid sequence, 218 residues long: MTNLTLDVQTAEGTTNGSVDLPAEIFDREVSVALLHQVVNAQLAAARQGTHSTKTRAEVRGGGRKPFRQKGTGRARQGSIRAPHFTGGGISHGPKPRDYAQRTPKKMIKAALYGALSDRARNERIHVISELVPGQAPSTKSAKAFIERLTERKSVLLVIGREDINAQKSANNLPGVHILAADQLNTYDVLNSDDIVFSVEALHTFINRATGAAQEEQN.

Residues 46 to 100 form a disordered region; sequence ARQGTHSTKTRAEVRGGGRKPFRQKGTGRARQGSIRAPHFTGGGISHGPKPRDYA. A compositionally biased stretch (basic residues) spans 62–73; it reads GGRKPFRQKGTG.

The protein belongs to the universal ribosomal protein uL4 family. Part of the 50S ribosomal subunit.

In terms of biological role, one of the primary rRNA binding proteins, this protein initially binds near the 5'-end of the 23S rRNA. It is important during the early stages of 50S assembly. It makes multiple contacts with different domains of the 23S rRNA in the assembled 50S subunit and ribosome. Functionally, forms part of the polypeptide exit tunnel. The polypeptide is Large ribosomal subunit protein uL4 (Corynebacterium efficiens (strain DSM 44549 / YS-314 / AJ 12310 / JCM 11189 / NBRC 100395)).